Reading from the N-terminus, the 336-residue chain is Dihydroorotate dehydrogenase (quinone) (336 aa).

FMN-binding positions include 62-66 (AGLDK) and Thr86. Position 66 (Lys66) interacts with substrate. 111-115 (NRMGF) is a substrate binding site. FMN contacts are provided by Asn139 and Asn172. Asn172 serves as a coordination point for substrate. Ser175 serves as the catalytic Nucleophile. Substrate is bound at residue Asn177. FMN-binding residues include Lys217 and Thr245. 246 to 247 (NT) is a binding site for substrate. FMN-binding positions include Gly268, Gly297, and 318–319 (YS).

This sequence belongs to the dihydroorotate dehydrogenase family. Type 2 subfamily. Monomer. FMN serves as cofactor.

It is found in the cell membrane. It carries out the reaction (S)-dihydroorotate + a quinone = orotate + a quinol. It functions in the pathway pyrimidine metabolism; UMP biosynthesis via de novo pathway; orotate from (S)-dihydroorotate (quinone route): step 1/1. Functionally, catalyzes the conversion of dihydroorotate to orotate with quinone as electron acceptor. This chain is Dihydroorotate dehydrogenase (quinone), found in Enterobacter sp. (strain 638).